Reading from the N-terminus, the 231-residue chain is mRNA-decapping enzyme subunit 1 (231 aa).

The segment at 92-120 is disordered; it reads QNGSNNIQVNNGSDNSNRNSSGNGNSYKS. Low complexity predominate over residues 101–120; it reads NNGSDNSNRNSSGNGNSYKS.

Belongs to the DCP1 family. As to quaternary structure, component of the decapping complex composed of DCP1 and DCP2. Interacts with mRNAs, DHH1, LSM1, LSM2, LSM3, LSM4, LSM5, LSM6, LSM7, and the cap-binding proteins PAB1 and TIF4632/eIF-4G. In terms of processing, phosphorylated.

The protein resides in the cytoplasm. It localises to the P-body. In terms of biological role, component of the decapping complex necessary for the degradation of mRNAs, both in normal mRNA turnover and in nonsense-mediated mRNA decay. Removes the 7-methyl guanine cap structure from mRNA molecules, yielding a 5'-phosphorylated mRNA fragment and 7m-GDP. Decapping is the major pathway of mRNA degradation in yeast. It occurs through deadenylation, decapping and subsequent 5' to 3' exonucleolytic decay of the transcript body. DCP1 is activated by the DEAD-box helicase DHH1 and destabilizes the eIF-4F cap-binding complex from the mRNA. In Saccharomyces cerevisiae (strain ATCC 204508 / S288c) (Baker's yeast), this protein is mRNA-decapping enzyme subunit 1 (DCP1).